Reading from the N-terminus, the 234-residue chain is Zinc finger BED domain-containing protein 3 (234 aa).

The interval 19 to 42 (AAARGGQCPGLGPAPTPTPPGRLG) is disordered. The segment at 43–104 (APYSEAWGYF…SAHRRELESS (62 aa)) adopts a BED-type zinc-finger fold. Positions 69, 72, 92, and 97 each coordinate Zn(2+). Disordered regions lie at residues 94–126 (RSAH…AAPE) and 202–225 (REGA…GDRD). Positions 111–122 (PAAPCPPPPGPA) are enriched in pro residues. A compositionally biased stretch (basic and acidic residues) spans 216–225 (LKDDPEGDRD).

As to quaternary structure, associates with the subcortical maternal complex (SCMC) composed of at least NLRP5, KHDC3L, OOEP, and TLE6 via interaction with NLRP5 and TLE6. Interacts with AXIN1; the interaction is direct, enhanced by protein kinase GSK3B and casein kinase CSNK1E activities and decreases GSK3B-induced beta-catenin serine and threonine phosphorylations. Secreted in blood plasma, and expressed in skeletal muscle and adipose tissue (at protein level).

It localises to the cytoplasm. Its subcellular location is the membrane. It is found in the secreted. Functionally, acts as a positive regulator in the activation of the canonical Wnt/beta-catenin signaling pathway by stabilizing cytoplasmic beta-catenin. Involved in transcription activation of Wnt target gene expression. Plays a role in symmetric division of blastomeres in the early stages of embryogenesis via regulation of mitotic spindle central positioning and organization of the F-actin filament network. Plays a role in regulating the distribution of cellular organelles, via modulation of cytoskeletal dynamics and cytoplasmic lattice formation. This chain is Zinc finger BED domain-containing protein 3 (ZBED3), found in Homo sapiens (Human).